Here is a 461-residue protein sequence, read N- to C-terminus: MSFRSVLLTALLSLSFTTTMQAAHHHYHRYTDKLHRQNHKKDLISPKPTEQEACNTPSLSKELIPLSEQRGLLSPIYDFISERLCLHGVSVRNLKQALKNSAGTQIALDWSILPQWFNPRVSHAPKLSIRDFGYSAHQTVTEATPPCWQNCFNPSAAVTIYDSSYGKGVFQISYTLVHYWRENAATAGDAMMLAGSINDYPSRQNIFSQFTFSQNFPNERVSLTIGQYSLYAIDGTLYNNDQQLGFISYALSQNPTATYSSGSLGAYLQVAPTASTSLQIGFQDAYNISGSSIKWSNLTKNRYNFHGFASWAPRCCLGSGQYSVLLYVTRQVPEQMEQTMGWSVNASQYISSKLYVFGRYSGVTGHVFPINRTYSCGMVSANLFNRNPQDLFGIACAFNNVHLSASPNAKRKYETVIEGFATIGCGPYLSFAPDFQLYLYPALRPNKQSARVYSVRANLAI.

Residues 1-22 form the signal peptide; sequence MSFRSVLLTALLSLSFTTTMQA.

This sequence belongs to the OprB family.

The protein localises to the cell outer membrane. In terms of biological role, facilitates L-arginine uptake, as part of the AaxABC system. The arginine uptake by the bacterium in the macrophage may be a virulence factor against the host innate immune response. This Chlamydia trachomatis serovar L2 (strain ATCC VR-902B / DSM 19102 / 434/Bu) protein is Porin AaxA (aaxA).